The primary structure comprises 141 residues: Hemoglobin subunit alpha-A (141 aa).

The Globin domain occupies 1-141; that stretch reads VLSGSDKTNV…VGNVLTAKYR (141 aa). Histidine 58 is an O2 binding site. Residue histidine 87 coordinates heme b.

It belongs to the globin family. As to quaternary structure, heterotetramer of two alpha chains and two beta chains. As to expression, red blood cells.

Functionally, involved in oxygen transport from the lung to the various peripheral tissues. This chain is Hemoglobin subunit alpha-A (HBAA), found in Chroicocephalus ridibundus (Black-headed gull).